The following is a 148-amino-acid chain: Protein Turandot Z (148 aa).

The N-terminal stretch at 1 to 23 (MYFAIRLSFVLAVLFCLTGNGSA) is a signal peptide.

This sequence belongs to the Turandot family.

It localises to the secreted. In terms of biological role, a humoral factor that may play a role in stress tolerance. The sequence is that of Protein Turandot Z from Drosophila sechellia (Fruit fly).